The sequence spans 1302 residues: Neuroglian (1302 aa).

A signal peptide spans 1–23; it reads MWRQSTILAALLVALLCAGSAES. At 24–1138 the chain is on the extracellular side; that stretch reads KGNRPPRITK…ANAGWFIGMM (1115 aa). Ig-like C2-type domains follow at residues 29–133, 134–225, 245–330, 339–426, 432–524, and 521–610; these read PRIT…AELN, AFKD…YKIG, PPVR…QSFS, PYFT…VYLN, PTIS…TRIT, and TRIT…ANLI. 4 cysteine pairs are disulfide-bonded: Cys59–Cys111, Cys155–Cys212, Cys268–Cys317, and Cys360–Cys410. N-linked (GlcNAc...) asparagine glycans are attached at residues Asn182 and Asn198. 2 N-linked (GlcNAc...) asparagine glycosylation sites follow: Asn411 and Asn448. Fibronectin type-III domains lie at 614–711, 716–813, 818–915, 916–1017, and 1021–1119; these read VPNA…TQPD, NPDN…SGED, APTN…TPEG, VPSP…LKDA, and APAT…TVEG. Cys625 and Cys706 are oxidised to a cystine. Residues Asn652 and Asn683 are each glycosylated (N-linked (GlcNAc...) asparagine). An N-linked (GlcNAc...) asparagine glycan is attached at Asn821. A glycan (N-linked (GlcNAc...) asparagine) is linked at Asn1125. The helical transmembrane segment at 1139 to 1154 threads the bilayer; it reads LALAFIIILFIIICII. At 1155-1302 the chain is on the cytoplasmic side; that stretch reads RRNRGGKYDV…AAAGAVATYV (148 aa). Basic and acidic residues predominate over residues 1172 to 1182; that stretch reads GRRDYPEEGGF. Disordered regions lie at residues 1172 to 1223 and 1236 to 1291; these read GRRD…GDTG and VPGK…ASNG. Residues 1188 to 1203 are compositionally biased toward polar residues; that stretch reads PLDNKSAGRQSVSSAN. Residues 1253–1275 show a composition bias toward low complexity; that stretch reads AAAHQAAPTAGGSGAAGSAAAAG.

In terms of assembly, forms a complex with Nrx-IV/Nrx and Cont. Forms a complex composed of septate junction proteins Nrx-IV/Nrx, Tsf2/MTf, Cont and Nrg during late embryogenesis. In terms of tissue distribution, restricted to the surface of neurons and glia in the developing nervous system. As to expression, restricted to non-neuronal tissues.

The protein resides in the cell membrane. It localises to the cell junction. Its subcellular location is the septate junction. Essential for septate junctions. Septate junctions, which are the equivalent of vertebrate tight junctions, are characterized by regular arrays of transverse structures that span the intermembrane space and form a physical barrier to diffusion. Required for formation of the hemolymph-brain barrier (the insect blood-brain barrier). Vital for embryonic development. Involved in the targeting for degradation or recycling of certain septate junction components, including kune and bou/boudin, by regulating their endocytosis. Functionally, may play a role in neural and glial cell adhesion in the developing embryo. In terms of biological role, may be a more general cell adhesion molecule involved in non-neuronal tissues and imaginal disk morphogenesis. The polypeptide is Neuroglian (Nrg) (Drosophila melanogaster (Fruit fly)).